Consider the following 216-residue polypeptide: GTP cyclohydrolase-2 (216 aa).

A GTP-binding site is contributed by 51–55; the sequence is RIHSE. Positions 56, 67, and 69 each coordinate Zn(2+). GTP-binding positions include Q72, 94–96, and T116; that span reads EGR. D128 functions as the Proton acceptor in the catalytic mechanism. R130 serves as the catalytic Nucleophile. Residues T151 and K156 each coordinate GTP.

It belongs to the GTP cyclohydrolase II family. It depends on Zn(2+) as a cofactor.

It catalyses the reaction GTP + 4 H2O = 2,5-diamino-6-hydroxy-4-(5-phosphoribosylamino)-pyrimidine + formate + 2 phosphate + 3 H(+). The protein operates within cofactor biosynthesis; riboflavin biosynthesis; 5-amino-6-(D-ribitylamino)uracil from GTP: step 1/4. In terms of biological role, catalyzes the conversion of GTP to 2,5-diamino-6-ribosylamino-4(3H)-pyrimidinone 5'-phosphate (DARP), formate and pyrophosphate. The sequence is that of GTP cyclohydrolase-2 from Haemophilus influenzae (strain PittEE).